We begin with the raw amino-acid sequence, 448 residues long: Methionine aminopeptidase 2-1 (448 aa).

Residues 1–90 form a disordered region; that stretch reads MAAQASEKLE…PPRVPVSSLF (90 aa). The segment covering 22 to 33 has biased composition (low complexity); that stretch reads AAGPAKAGQADA. Over residues 34 to 46 the composition is skewed to acidic residues; the sequence is GEVEDESDDDADD. Low complexity predominate over residues 47 to 58; sequence AGAAADGAANGA. Basic residues predominate over residues 59–74; it reads AKKKKKRKSKKKKKGG. A compositionally biased stretch (low complexity) spans 75–88; that stretch reads AKVQSSPPRVPVSS. Substrate is bound at residue His-198. Asp-218, Asp-229, and His-301 together coordinate a divalent metal cation. His-309 contributes to the substrate binding site. The a divalent metal cation site is built by Glu-334 and Glu-429.

Belongs to the peptidase M24A family. Methionine aminopeptidase eukaryotic type 2 subfamily. Co(2+) is required as a cofactor. The cofactor is Zn(2+). Requires Mn(2+) as cofactor. It depends on Fe(2+) as a cofactor.

It is found in the cytoplasm. It catalyses the reaction Release of N-terminal amino acids, preferentially methionine, from peptides and arylamides.. Its function is as follows. Cotranslationally removes the N-terminal methionine from nascent proteins. The N-terminal methionine is often cleaved when the second residue in the primary sequence is small and uncharged (Met-Ala-, Cys, Gly, Pro, Ser, Thr, or Val). The chain is Methionine aminopeptidase 2-1 from Emericella nidulans (strain FGSC A4 / ATCC 38163 / CBS 112.46 / NRRL 194 / M139) (Aspergillus nidulans).